The primary structure comprises 199 residues: ATP-dependent Clp protease proteolytic subunit (199 aa).

Catalysis depends on Ser-103, which acts as the Nucleophile. His-128 is an active-site residue.

It belongs to the peptidase S14 family. Fourteen ClpP subunits assemble into 2 heptameric rings which stack back to back to give a disk-like structure with a central cavity, resembling the structure of eukaryotic proteasomes.

The protein localises to the cytoplasm. It catalyses the reaction Hydrolysis of proteins to small peptides in the presence of ATP and magnesium. alpha-casein is the usual test substrate. In the absence of ATP, only oligopeptides shorter than five residues are hydrolyzed (such as succinyl-Leu-Tyr-|-NHMec, and Leu-Tyr-Leu-|-Tyr-Trp, in which cleavage of the -Tyr-|-Leu- and -Tyr-|-Trp bonds also occurs).. Its function is as follows. Cleaves peptides in various proteins in a process that requires ATP hydrolysis. Has a chymotrypsin-like activity. Plays a major role in the degradation of misfolded proteins. The chain is ATP-dependent Clp protease proteolytic subunit from Photobacterium profundum (strain SS9).